Consider the following 425-residue polypeptide: Histidine--tRNA ligase (425 aa).

It belongs to the class-II aminoacyl-tRNA synthetase family. As to quaternary structure, homodimer.

Its subcellular location is the cytoplasm. The catalysed reaction is tRNA(His) + L-histidine + ATP = L-histidyl-tRNA(His) + AMP + diphosphate + H(+). This is Histidine--tRNA ligase from Chlorobium chlorochromatii (strain CaD3).